A 178-amino-acid chain; its full sequence is Outer envelope pore protein 16-2, chloroplastic (178 aa).

The segment at 1–102 is contains beta strands; that stretch reads MEKSGGRIVM…DALVKNTGKE (102 aa). A helical membrane pass occupies residues 103-119; that stretch reads SLQWGLAAGLYSGITYG.

It belongs to the Tim17/Tim22/Tim23 family. Plastid outer envelope porin OEP16 (TC 1.B.30) subfamily. In terms of assembly, homodimer and oligomers in membrane. As to expression, detected in pollen and seeds. Present in leaves and cotyledons.

The protein resides in the plastid. Its subcellular location is the chloroplast outer membrane. In terms of biological role, voltage-dependent high-conductance channel with a slight cation-selectivity; selective for amino acids but excludes triosephosphates or uncharged sugars. Non-essential amino acid-selective channel protein and translocation pore for NADPH:protochlorophyllide oxidoreductase A (PORA) and possibly PORB. The polypeptide is Outer envelope pore protein 16-2, chloroplastic (OEP162) (Arabidopsis thaliana (Mouse-ear cress)).